The sequence spans 357 residues: Enoyl-[acyl-carrier-protein] reductase, mitochondrial (357 aa).

The transit peptide at 1 to 19 (MLRRGFLSRINAAQWSRQM) directs the protein to the mitochondrion. The Enoyl reductase (ER) domain maps to 36–352 (EVLQLVEDKL…FKGFTGKKYI (317 aa)). Y74 serves as the catalytic Proton donor. Residues N147, 173 to 176 (NSAV), 196 to 198 (RDR), 264 to 267 (YGGM), 289 to 291 (FWM), K349, and K350 each bind NADP(+).

This sequence belongs to the zinc-containing alcohol dehydrogenase family. Quinone oxidoreductase subfamily. As to quaternary structure, homodimer. Expressed in the central nervous system.

The protein resides in the mitochondrion. The enzyme catalyses a 2,3-saturated acyl-[ACP] + NADP(+) = a (2E)-enoyl-[ACP] + NADPH + H(+). Functionally, catalyzes the NADPH-dependent reduction of trans-2-enoyl thioesters in mitochondrial fatty acid synthesis (fatty acid synthesis type II). Fatty acid chain elongation in mitochondria uses acyl carrier protein (ACP) as an acyl group carrier, but the enzyme accepts both ACP and CoA thioesters as substrates in vitro. Involved in iron homeostasis; affecting Fe-S cluster assembly and ceramide metabolism. Required for proper morphology and bioenergetic functions of mitochondria. Required for maintenance of neurons, including photoreceptor neurons. The chain is Enoyl-[acyl-carrier-protein] reductase, mitochondrial from Drosophila melanogaster (Fruit fly).